Consider the following 1162-residue polypeptide: Cartilage intermediate layer protein 2 (1162 aa).

A signal peptide spans 1-20; the sequence is MASPLPLLYLCLAALHLAGA. The disordered stretch occupies residues 23 to 51; it reads ATPTEEHTSTARGLQGRPPDTGQPSPALE. The 52-residue stretch at 146-197 folds into the TSP type-1 domain; sequence EAAWGAWGAWGLCSKSCGLGRRLRRRSCQSSSGDTCPGSPQEAQKCVRSRCP. 4 disulfide bridges follow: Cys158/Cys191, Cys162/Cys196, Cys173/Cys181, and Cys314/Cys360. In terms of domain architecture, Ig-like C2-type spans 293 to 377; sequence PYLVKHPESR…TVRSRAALLT (85 aa). N-linked (GlcNAc...) asparagine glycosylation is present at Asn330.

In terms of processing, may be cleaved into 2 chains possibly by a furin-like protease upon or preceding secretion. Post-translationally, N-glycosylated. Expressed in articulated and meniscal cartilage (at protein level). Also detected in heart, skeletal muscle and brain. Not detected in growth plate cartilage.

It localises to the secreted. The protein localises to the extracellular space. The protein resides in the extracellular matrix. In terms of biological role, may play a role in cartilage scaffolding. The protein is Cartilage intermediate layer protein 2 of Mus musculus (Mouse).